Here is a 446-residue protein sequence, read N- to C-terminus: Tryptophan dimethylallyltransferase (446 aa).

L-tryptophan contacts are provided by residues 83–84 (IL) and E92. 3 residues coordinate substrate: R103, K189, and Y191. The L-tryptophan site is built by Y193 and R246. R259, K261, Y263, Q345, and Y347 together coordinate substrate.

It belongs to the tryptophan dimethylallyltransferase family. Homodimer.

It carries out the reaction L-tryptophan + dimethylallyl diphosphate = 4-(3-methylbut-2-enyl)-L-tryptophan + diphosphate. It participates in alkaloid biosynthesis; ergot alkaloid biosynthesis. Tryptophan dimethylallyltransferase; part of the gene cluster that mediates the biosynthesis of fungal ergot alkaloid. DmaW catalyzes the first step of ergot alkaloid biosynthesis by condensing dimethylallyl diphosphate (DMAP) and tryptophan to form 4-dimethylallyl-L-tryptophan. The second step is catalyzed by the methyltransferase easF that methylates 4-dimethylallyl-L-tryptophan in the presence of S-adenosyl-L-methionine, resulting in the formation of 4-dimethylallyl-L-abrine. The catalase easC and the FAD-dependent oxidoreductase easE then transform 4-dimethylallyl-L-abrine to chanoclavine-I which is further oxidized by easD in the presence of NAD(+), resulting in the formation of chanoclavine-I aldehyde. Chanoclavine-I aldehyde is the precursor of ergoamides and ergopeptines in Clavicipitaceae, and clavine-type alcaloids such as fumiclavine in Trichocomaceae. However, the metabolites downstream of chanoclavine-I aldehyde in Arthrodermataceae have not been identified yet. The chain is Tryptophan dimethylallyltransferase from Arthroderma otae (strain ATCC MYA-4605 / CBS 113480) (Microsporum canis).